Consider the following 625-residue polypeptide: Chaperone protein HtpG (625 aa).

The interval 1–337 (MSTNQETRGF…TNDLPLNVSR (337 aa)) is a; substrate-binding. The segment at 338–554 (EILQENKITA…NDEMTTQMAK (217 aa)) is b. Residues 555–625 (LFAAMGQKAP…FIKRMNKLLG (71 aa)) form a c region.

The protein belongs to the heat shock protein 90 family. In terms of assembly, homodimer.

The protein resides in the cytoplasm. In terms of biological role, molecular chaperone. Has ATPase activity. In Actinobacillus pleuropneumoniae serotype 5b (strain L20), this protein is Chaperone protein HtpG.